The primary structure comprises 238 residues: Phosphoribosylaminoimidazole-succinocarboxamide synthase (238 aa).

It belongs to the SAICAR synthetase family.

It catalyses the reaction 5-amino-1-(5-phospho-D-ribosyl)imidazole-4-carboxylate + L-aspartate + ATP = (2S)-2-[5-amino-1-(5-phospho-beta-D-ribosyl)imidazole-4-carboxamido]succinate + ADP + phosphate + 2 H(+). It participates in purine metabolism; IMP biosynthesis via de novo pathway; 5-amino-1-(5-phospho-D-ribosyl)imidazole-4-carboxamide from 5-amino-1-(5-phospho-D-ribosyl)imidazole-4-carboxylate: step 1/2. This chain is Phosphoribosylaminoimidazole-succinocarboxamide synthase, found in Nitrosococcus oceani (strain ATCC 19707 / BCRC 17464 / JCM 30415 / NCIMB 11848 / C-107).